The primary structure comprises 426 residues: Phosphoribosylamine--glycine ligase (426 aa).

The 207-residue stretch at 107–313 (KDFMQKYGVK…FLNVINSALN (207 aa)) folds into the ATP-grasp domain. 133–194 (LDKISYPVVI…EEFLDGVEIS (62 aa)) is a binding site for ATP. Positions 283 and 285 each coordinate Mg(2+).

It belongs to the GARS family. Requires Mg(2+) as cofactor. Mn(2+) serves as cofactor.

It catalyses the reaction 5-phospho-beta-D-ribosylamine + glycine + ATP = N(1)-(5-phospho-beta-D-ribosyl)glycinamide + ADP + phosphate + H(+). The protein operates within purine metabolism; IMP biosynthesis via de novo pathway; N(1)-(5-phospho-D-ribosyl)glycinamide from 5-phospho-alpha-D-ribose 1-diphosphate: step 2/2. This is Phosphoribosylamine--glycine ligase from Fusobacterium nucleatum subsp. nucleatum (strain ATCC 25586 / DSM 15643 / BCRC 10681 / CIP 101130 / JCM 8532 / KCTC 2640 / LMG 13131 / VPI 4355).